A 100-amino-acid chain; its full sequence is Large ribosomal subunit protein uL23 (100 aa).

The protein belongs to the universal ribosomal protein uL23 family. Part of the 50S ribosomal subunit. Contacts protein L29, and trigger factor when it is bound to the ribosome.

Its function is as follows. One of the early assembly proteins it binds 23S rRNA. One of the proteins that surrounds the polypeptide exit tunnel on the outside of the ribosome. Forms the main docking site for trigger factor binding to the ribosome. This is Large ribosomal subunit protein uL23 from Mycobacterium leprae (strain Br4923).